The chain runs to 458 residues: Divalent metal cation transporter MntH (458 aa).

Helical transmembrane passes span 38 to 58, 76 to 96, 119 to 139, 151 to 171, 180 to 200, 223 to 243, 275 to 295, 315 to 335, 370 to 390, 393 to 413, and 437 to 457; these read GFWK…VGYM, SLLS…AMAA, GGFL…AEII, MPLI…LLLM, AVVA…VILA, MLYL…LFLG, LTMA…LFFG, IVGA…LLAS, LMSV…EAKI, LLTF…IPLV, and FISG…LGFV.

The protein belongs to the NRAMP family.

The protein resides in the cell membrane. Functionally, h(+)-stimulated, divalent metal cation uptake system. This is Divalent metal cation transporter MntH from Lacticaseibacillus paracasei (strain ATCC 334 / BCRC 17002 / CCUG 31169 / CIP 107868 / KCTC 3260 / NRRL B-441) (Lactobacillus paracasei).